The sequence spans 134 residues: Phosphoribosyl-ATP pyrophosphatase 2 (134 aa).

It belongs to the PRA-PH family.

The protein localises to the cytoplasm. The enzyme catalyses 1-(5-phospho-beta-D-ribosyl)-ATP + H2O = 1-(5-phospho-beta-D-ribosyl)-5'-AMP + diphosphate + H(+). It functions in the pathway amino-acid biosynthesis; L-histidine biosynthesis; L-histidine from 5-phospho-alpha-D-ribose 1-diphosphate: step 2/9. This Bradyrhizobium diazoefficiens (strain JCM 10833 / BCRC 13528 / IAM 13628 / NBRC 14792 / USDA 110) protein is Phosphoribosyl-ATP pyrophosphatase 2 (hisE2).